Reading from the N-terminus, the 358-residue chain is MKPSILEKLQQLGDRLEEVTHLLGQPEATSDMDNYRKLTREHAELTPVVEVFQNYRLAQSDLADAEEMLSDPEMKDFAAEEIEAAKAKIDELDTELQKLLLPKDADDDKNIFIEIRAGTGGGEAALFAGDLLRMYSRYAERNRWQVEIVSANESELGGYKEVIARIVGLGAYSRLKFESGGHRVQRVPATESQGRIHTSACTVAVMPEADELEDIELNPADLRTDTFRASGAGGQHINKTDSAVRITHLPTGMVVECQDGRSQHANKAQAMKVLAARLNDAQKREVQAKEAAERKSLIGSGDRSERIRTYNYPQGRVTDHRINLTLHKLDFVMDGDLAEITDALIAEHQAELLAAMGD.

The residue at position 235 (Gln235) is an N5-methylglutamine.

The protein belongs to the prokaryotic/mitochondrial release factor family. Methylated by PrmC. Methylation increases the termination efficiency of RF1.

It is found in the cytoplasm. In terms of biological role, peptide chain release factor 1 directs the termination of translation in response to the peptide chain termination codons UAG and UAA. The chain is Peptide chain release factor 1 from Neisseria gonorrhoeae (strain NCCP11945).